The chain runs to 398 residues: 1-deoxy-D-xylulose 5-phosphate reductoisomerase (398 aa).

The NADPH site is built by Thr10, Gly11, Ser12, Ile13, Gly36, Asn38, and Asn124. Lys125 is a binding site for 1-deoxy-D-xylulose 5-phosphate. Glu126 serves as a coordination point for NADPH. A Mn(2+)-binding site is contributed by Asp150. The 1-deoxy-D-xylulose 5-phosphate site is built by Ser151, Glu152, Ser186, and His209. Glu152 provides a ligand contact to Mn(2+). Gly215 is an NADPH binding site. 1-deoxy-D-xylulose 5-phosphate is bound by residues Ser222, Asn227, Lys228, and Glu231. Glu231 serves as a coordination point for Mn(2+).

The protein belongs to the DXR family. In terms of assembly, homodimer. The cofactor is Mg(2+). It depends on Mn(2+) as a cofactor.

It catalyses the reaction 2-C-methyl-D-erythritol 4-phosphate + NADP(+) = 1-deoxy-D-xylulose 5-phosphate + NADPH + H(+). It functions in the pathway isoprenoid biosynthesis; isopentenyl diphosphate biosynthesis via DXP pathway; isopentenyl diphosphate from 1-deoxy-D-xylulose 5-phosphate: step 1/6. Catalyzes the NADPH-dependent rearrangement and reduction of 1-deoxy-D-xylulose-5-phosphate (DXP) to 2-C-methyl-D-erythritol 4-phosphate (MEP). This chain is 1-deoxy-D-xylulose 5-phosphate reductoisomerase, found in Pectobacterium atrosepticum (strain SCRI 1043 / ATCC BAA-672) (Erwinia carotovora subsp. atroseptica).